Here is a 481-residue protein sequence, read N- to C-terminus: Aspartyl/glutamyl-tRNA(Asn/Gln) amidotransferase subunit B (481 aa).

This sequence belongs to the GatB/GatE family. GatB subfamily. In terms of assembly, heterotrimer of A, B and C subunits.

The catalysed reaction is L-glutamyl-tRNA(Gln) + L-glutamine + ATP + H2O = L-glutaminyl-tRNA(Gln) + L-glutamate + ADP + phosphate + H(+). It catalyses the reaction L-aspartyl-tRNA(Asn) + L-glutamine + ATP + H2O = L-asparaginyl-tRNA(Asn) + L-glutamate + ADP + phosphate + 2 H(+). Its function is as follows. Allows the formation of correctly charged Asn-tRNA(Asn) or Gln-tRNA(Gln) through the transamidation of misacylated Asp-tRNA(Asn) or Glu-tRNA(Gln) in organisms which lack either or both of asparaginyl-tRNA or glutaminyl-tRNA synthetases. The reaction takes place in the presence of glutamine and ATP through an activated phospho-Asp-tRNA(Asn) or phospho-Glu-tRNA(Gln). The chain is Aspartyl/glutamyl-tRNA(Asn/Gln) amidotransferase subunit B from Pseudomonas savastanoi pv. phaseolicola (strain 1448A / Race 6) (Pseudomonas syringae pv. phaseolicola (strain 1448A / Race 6)).